The sequence spans 216 residues: Glycerol-3-phosphate acyltransferase (216 aa).

The next 5 helical transmembrane spans lie at 4-24 (TIIG…LWIG), 71-91 (LPFF…LAVI), 113-133 (VVLG…ASIL), 144-164 (VLSA…GFIL), and 165-185 (PSYD…IILR).

The protein belongs to the PlsY family. In terms of assembly, probably interacts with PlsX.

Its subcellular location is the cell membrane. It carries out the reaction an acyl phosphate + sn-glycerol 3-phosphate = a 1-acyl-sn-glycero-3-phosphate + phosphate. It participates in lipid metabolism; phospholipid metabolism. Functionally, catalyzes the transfer of an acyl group from acyl-phosphate (acyl-PO(4)) to glycerol-3-phosphate (G3P) to form lysophosphatidic acid (LPA). This enzyme utilizes acyl-phosphate as fatty acyl donor, but not acyl-CoA or acyl-ACP. In Streptococcus sanguinis (strain SK36), this protein is Glycerol-3-phosphate acyltransferase.